The following is a 495-amino-acid chain: Cytochrome P450 Tp4149 (495 aa).

The next 2 membrane-spanning stretches (helical) occupy residues Ile4–Ile24 and Tyr208–Asp228. Residue Asn419 is glycosylated (N-linked (GlcNAc...) asparagine). A heme-binding site is contributed by Cys437.

It belongs to the cytochrome P450 family. Heme is required as a cofactor.

Its subcellular location is the membrane. The protein operates within secondary metabolite biosynthesis; terpenoid biosynthesis. Probably involved in the biosynthesis of germacrene-derived sesquiterpene lactones. The polypeptide is Cytochrome P450 Tp4149 (Tanacetum parthenium (Feverfew)).